A 166-amino-acid chain; its full sequence is Putative transmembrane protein encoded by LINC00477 (166 aa).

An N-linked (GlcNAc...) asparagine glycan is attached at Asn-7. The next 3 helical transmembrane spans lie at 15–35, 41–61, and 63–83; these read VSSF…FFLC, MTGC…VLGP, and PMGM…RFLG. Residues 127–166 are disordered; sequence LPVPHPPSPLSKCPQHPRPRRTKGPGLRKLWGPGPPFFPS.

It is found in the membrane. This is Putative transmembrane protein encoded by LINC00477 (LINC00477) from Homo sapiens (Human).